Reading from the N-terminus, the 363-residue chain is Peptide chain release factor 2 (363 aa).

At Q251 the chain carries N5-methylglutamine.

It belongs to the prokaryotic/mitochondrial release factor family. Post-translationally, methylated by PrmC. Methylation increases the termination efficiency of RF2.

It is found in the cytoplasm. Functionally, peptide chain release factor 2 directs the termination of translation in response to the peptide chain termination codons UGA and UAA. This chain is Peptide chain release factor 2 (prfB), found in Helicobacter pylori (strain ATCC 700392 / 26695) (Campylobacter pylori).